The primary structure comprises 228 residues: Phosphoribosylformylglycinamidine synthase subunit PurQ (228 aa).

Residues 3–225 enclose the Glutamine amidotransferase type-1 domain; sequence FAVLVFPGSN…LTTLKSGVVT (223 aa). Cys-86 (nucleophile) is an active-site residue. Active-site residues include His-194 and Glu-196.

As to quaternary structure, part of the FGAM synthase complex composed of 1 PurL, 1 PurQ and 2 PurS subunits.

The protein resides in the cytoplasm. It catalyses the reaction N(2)-formyl-N(1)-(5-phospho-beta-D-ribosyl)glycinamide + L-glutamine + ATP + H2O = 2-formamido-N(1)-(5-O-phospho-beta-D-ribosyl)acetamidine + L-glutamate + ADP + phosphate + H(+). The enzyme catalyses L-glutamine + H2O = L-glutamate + NH4(+). Its pathway is purine metabolism; IMP biosynthesis via de novo pathway; 5-amino-1-(5-phospho-D-ribosyl)imidazole from N(2)-formyl-N(1)-(5-phospho-D-ribosyl)glycinamide: step 1/2. In terms of biological role, part of the phosphoribosylformylglycinamidine synthase complex involved in the purines biosynthetic pathway. Catalyzes the ATP-dependent conversion of formylglycinamide ribonucleotide (FGAR) and glutamine to yield formylglycinamidine ribonucleotide (FGAM) and glutamate. The FGAM synthase complex is composed of three subunits. PurQ produces an ammonia molecule by converting glutamine to glutamate. PurL transfers the ammonia molecule to FGAR to form FGAM in an ATP-dependent manner. PurS interacts with PurQ and PurL and is thought to assist in the transfer of the ammonia molecule from PurQ to PurL. The protein is Phosphoribosylformylglycinamidine synthase subunit PurQ of Latilactobacillus sakei subsp. sakei (strain 23K) (Lactobacillus sakei subsp. sakei).